We begin with the raw amino-acid sequence, 240 residues long: Probable septum site-determining protein MinC (240 aa).

Belongs to the MinC family. As to quaternary structure, interacts with MinD and FtsZ.

In terms of biological role, cell division inhibitor that blocks the formation of polar Z ring septums. Rapidly oscillates between the poles of the cell to destabilize FtsZ filaments that have formed before they mature into polar Z rings. Prevents FtsZ polymerization. The chain is Probable septum site-determining protein MinC from Buchnera aphidicola subsp. Cinara cedri (strain Cc).